The primary structure comprises 433 residues: L-2-hydroxyglutarate dehydrogenase, mitochondrial (433 aa).

The protein belongs to the L2HGDH family. The cofactor is FAD.

The protein localises to the mitochondrion. It catalyses the reaction (S)-2-hydroxyglutarate + A = 2-oxoglutarate + AH2. The protein is L-2-hydroxyglutarate dehydrogenase, mitochondrial of Caenorhabditis elegans.